The sequence spans 227 residues: MICOS complex subunit MIC19 (227 aa).

A lipid anchor (N-myristoyl glycine) is attached at Gly2. Residue Ser29 is modified to Phosphoserine. The disordered stretch occupies residues 34–60 (DRMKETSPSGPKSQRYSGTYGASVSDE). Positions 39–55 (TSPSGPKSQRYSGTYGA) are enriched in polar residues. Residue Tyr49 is modified to Phosphotyrosine. Residues Ser50, Ser56, and Ser58 each carry the phosphoserine modification. Lys142 carries the post-translational modification N6-acetyllysine. The 43-residue stretch at 180 to 222 (HPVCADLQAQILQCYRQNTQQTLSCSALASQYMRCVNQAKQST) folds into the CHCH domain. 2 short sequence motifs (cx9C motif) span residues 183–193 (CADLQAQILQC) and 204–214 (CSALASQYMRC). 2 disulfides stabilise this stretch: Cys183–Cys214 and Cys193–Cys204.

The protein belongs to the MICOS complex subunit Mic19 family. Metazoan Mic19 subfamily. Component of the mitochondrial contact site and cristae organizing system (MICOS) complex, composed of at least MICOS10/MIC10, CHCHD3/MIC19, CHCHD6/MIC25, APOOL/MIC27, IMMT/MIC60, APOO/MIC23/MIC26 and MICOS13/MIC13. This complex was also known under the names MINOS or MitOS complex. The MICOS complex associates with mitochondrial outer membrane proteins SAMM50, MTX1 and MTX2 (together described as components of the mitochondrial outer membrane sorting assembly machinery (SAM) complex) and DNAJC11, mitochondrial inner membrane protein TMEM11 and with HSPA9. The MICOS and SAM complexes together with DNAJC11 are part of a large protein complex spanning both membranes termed the mitochondrial intermembrane space bridging (MIB) complex. Interacts with HSPA1A/HSPA1B and OPA1, preferentially with the soluble OPA1 form. Interacts with IMMT/MIC60.

Its subcellular location is the mitochondrion inner membrane. It localises to the cytoplasm. It is found in the nucleus. The protein localises to the mitochondrion. Component of the MICOS complex, a large protein complex of the mitochondrial inner membrane that plays crucial roles in the maintenance of crista junctions, inner membrane architecture, and formation of contact sites to the outer membrane. Has also been shown to function as a transcription factor which binds to the BAG1 promoter and represses BAG1 transcription. Plays an important role in the maintenance of the MICOS complex stability and the mitochondrial cristae morphology. The chain is MICOS complex subunit MIC19 (CHCHD3) from Bos taurus (Bovine).